A 362-amino-acid polypeptide reads, in one-letter code: D-alanine--D-alanine ligase (362 aa).

Residues 134–345 (KILAQRAGVP…YPDLITRLIR (212 aa)) enclose the ATP-grasp domain. 170–225 (GQLGTSNLFVKPSNQGSSVGITHVTDDSNYAEALAEAFKYDDKVLVEEGIVGTEVE) provides a ligand contact to ATP. Mg(2+) contacts are provided by D298, E312, and N314.

The protein belongs to the D-alanine--D-alanine ligase family. The cofactor is Mg(2+). Requires Mn(2+) as cofactor.

The protein resides in the cytoplasm. It catalyses the reaction 2 D-alanine + ATP = D-alanyl-D-alanine + ADP + phosphate + H(+). It participates in cell wall biogenesis; peptidoglycan biosynthesis. Functionally, cell wall formation. The polypeptide is D-alanine--D-alanine ligase (Lactobacillus delbrueckii subsp. bulgaricus (strain ATCC 11842 / DSM 20081 / BCRC 10696 / JCM 1002 / NBRC 13953 / NCIMB 11778 / NCTC 12712 / WDCM 00102 / Lb 14)).